Reading from the N-terminus, the 571-residue chain is Proline--tRNA ligase (571 aa).

It belongs to the class-II aminoacyl-tRNA synthetase family. ProS type 1 subfamily. In terms of assembly, homodimer.

The protein localises to the cytoplasm. The enzyme catalyses tRNA(Pro) + L-proline + ATP = L-prolyl-tRNA(Pro) + AMP + diphosphate. In terms of biological role, catalyzes the attachment of proline to tRNA(Pro) in a two-step reaction: proline is first activated by ATP to form Pro-AMP and then transferred to the acceptor end of tRNA(Pro). As ProRS can inadvertently accommodate and process non-cognate amino acids such as alanine and cysteine, to avoid such errors it has two additional distinct editing activities against alanine. One activity is designated as 'pretransfer' editing and involves the tRNA(Pro)-independent hydrolysis of activated Ala-AMP. The other activity is designated 'posttransfer' editing and involves deacylation of mischarged Ala-tRNA(Pro). The misacylated Cys-tRNA(Pro) is not edited by ProRS. The chain is Proline--tRNA ligase from Vibrio vulnificus (strain CMCP6).